The chain runs to 113 residues: Teretoxin Tan14.1 (113 aa).

The N-terminal stretch at 1-21 (MALEAQMTLRMFVLVAMASTV) is a signal peptide. Residues 22 to 86 (HVLSSSFSED…DETSSRTGKR (65 aa)) constitute a propeptide that is removed on maturation.

Belongs to the teretoxin N (TN) superfamily. Contains 2 disulfide bonds. Expressed by the venom duct.

The protein localises to the secreted. In Terebra anilis (Auger snail), this protein is Teretoxin Tan14.1.